The primary structure comprises 148 residues: Snaclec jerdonuxin subunit beta (148 aa).

The N-terminal stretch at 1-23 (MVRFIFVSFGLLVVFLSLSGIGA) is a signal peptide. Intrachain disulfides connect C27–C38, C55–C144, and C121–C136. The region spanning 34–145 (YDEHCYQVFQ…CSSKRYIVCK (112 aa)) is the C-type lectin domain.

This sequence belongs to the snaclec family. Tetramer of 4 heterodimers of alpha and beta subunits; disulfide-linked. As to expression, expressed by the venom gland.

The protein resides in the secreted. Snaclec that strongly induces platelet aggregation, in a dose-dependent manner. The sequence is that of Snaclec jerdonuxin subunit beta from Protobothrops jerdonii (Jerdon's pitviper).